The following is a 245-amino-acid chain: 8-amino-3,8-dideoxy-manno-octulosonate cytidylyltransferase (245 aa).

The protein belongs to the KdsB family.

It is found in the cytoplasm. It catalyses the reaction 8-amino-3,8-dideoxy-alpha-D-manno-octulosonate + CTP = CMP-8-amino-3,8-dideoxy-alpha-D-manno-oct-2-ulosonate + diphosphate. Its pathway is bacterial outer membrane biogenesis; lipopolysaccharide biosynthesis. Activates KDO8N (a required 8-carbon sugar) for incorporation into bacterial lipopolysaccharide in the Shewanella genus. The sequence is that of 8-amino-3,8-dideoxy-manno-octulosonate cytidylyltransferase from Shewanella baltica (strain OS195).